Consider the following 324-residue polypeptide: Dehydrogenase/reductase SDR family member 7C-A (324 aa).

An N-terminal signal peptide occupies residues 1 to 17; it reads MAVPSVMVLPLLIVVFA. 41–65 contributes to the NAD(+) binding site; it reads VITDAVSGMGSECARLFHAGGARLV. Ser-178 lines the substrate pocket. Residue Tyr-191 is the Proton acceptor of the active site.

It belongs to the short-chain dehydrogenases/reductases (SDR) family.

The protein localises to the secreted. Its function is as follows. Putative oxidoreductase. The protein is Dehydrogenase/reductase SDR family member 7C-A (dhrs7ca) of Danio rerio (Zebrafish).